The chain runs to 365 residues: U1 snRNP-associated protein usp109 (365 aa).

3 RRM domains span residues 3 to 79 (TSLW…VVPE), 86 to 162 (YMLF…SVKS), and 189 to 259 (TAVY…WARP).

As to quaternary structure, component of the U1 snRNP complex.

The protein resides in the nucleus. The protein is U1 snRNP-associated protein usp109 (usp109) of Schizosaccharomyces pombe (strain 972 / ATCC 24843) (Fission yeast).